Reading from the N-terminus, the 89-residue chain is HssA/B-like protein 15 (89 aa).

Belongs to the hssA/B family.

The chain is HssA/B-like protein 15 (hssl15) from Dictyostelium discoideum (Social amoeba).